A 343-amino-acid polypeptide reads, in one-letter code: L-threonine 3-dehydrogenase (343 aa).

Cysteine 40 contributes to the Zn(2+) binding site. Active-site charge relay system residues include threonine 42 and histidine 45. Zn(2+) contacts are provided by histidine 65, glutamate 66, cysteine 95, cysteine 98, cysteine 101, and cysteine 109. Residues isoleucine 177, aspartate 197, arginine 202, 264 to 266, and 288 to 289 each bind NAD(+); these read LGI and IY.

The protein belongs to the zinc-containing alcohol dehydrogenase family. As to quaternary structure, homotetramer. Requires Zn(2+) as cofactor.

The protein resides in the cytoplasm. The catalysed reaction is L-threonine + NAD(+) = (2S)-2-amino-3-oxobutanoate + NADH + H(+). Its pathway is amino-acid degradation; L-threonine degradation via oxydo-reductase pathway; glycine from L-threonine: step 1/2. Its function is as follows. Catalyzes the NAD(+)-dependent oxidation of L-threonine to 2-amino-3-ketobutyrate. This chain is L-threonine 3-dehydrogenase, found in Photobacterium profundum (strain SS9).